The sequence spans 119 residues: C-C motif chemokine 24 (119 aa).

An N-terminal signal peptide occupies residues 1-26; that stretch reads MAGLMTIVTSLLFLGVCAHHIIPTGS. 2 disulfides stabilise this stretch: Cys33–Cys58 and Cys34–Cys74. A glycan (N-linked (GlcNAc...) asparagine) is linked at Asn115.

This sequence belongs to the intercrine beta (chemokine CC) family. Post-translationally, N-glycosylated. In terms of tissue distribution, activated monocytes and activated T lymphocytes.

The protein localises to the secreted. In terms of biological role, chemotactic for resting T-lymphocytes, and eosinophils. Has lower chemotactic activity for neutrophils but none for monocytes and activated lymphocytes. Is a strong suppressor of colony formation by a multipotential hematopoietic progenitor cell line. Binds to CCR3. The sequence is that of C-C motif chemokine 24 from Homo sapiens (Human).